Here is a 311-residue protein sequence, read N- to C-terminus: Putative HTH-type transcriptional regulatory protein MTH_967 (311 aa).

The region spanning 134–192 (LREVREEYNLSLKDLADLAHVSRKTIYKYENGLARASAETAMILEEILNIRITLSIDIF) is the HTH cro/C1-type domain. The segment at residues 145 to 164 (LKDLADLAHVSRKTIYKYEN) is a DNA-binding region (H-T-H motif).

This is Putative HTH-type transcriptional regulatory protein MTH_967 from Methanothermobacter thermautotrophicus (strain ATCC 29096 / DSM 1053 / JCM 10044 / NBRC 100330 / Delta H) (Methanobacterium thermoautotrophicum).